A 487-amino-acid chain; its full sequence is MMHFKSGLELTELQNMTVPEDDNISNDSNDFTEVENGQINSKFISDRESRRSLTNSHLEKKKCDEYIPGTTSLGMSVFNLSNAIMGSGILGLAFALANTGILLFLVLLTSVTLLSIYSINLLLICSKETGCMVYEKLGEQVFGTTGKFVIFGATSLQNTGAMLSYLFIVKNELPSAIKFLMGKEETFSAWYVDGRVLVVIVTFGIILPLCLLKNLGYLGYTSGFSLSCMVFFLIVVIYKKFQIPCIVPELNSTISANSTNADTCTPKYVTFNSKTVYALPTIAFAFVCHPSVLPIYSELKDRSQKKMQMVSNISFFAMFVMYFLTAIFGYLTFYDNVQSDLLHKYQSKDDILILTVRLAVIVAVILTVPVLFFTVRSSLFELAKKTKFNLCRHTVVTCILLVVINLLVIFIPSMKDIFGVVGVTSANMLIFILPSSLYLKITDQDGDKGTQRIWAALFLGLGVLFSLVSIPLVIYDWACSSSSDEGH.

At 1–74 (MMHFKSGLEL…EYIPGTTSLG (74 aa)) the chain is on the cytoplasmic side. Ser6 carries the phosphoserine modification. Thr11 is modified (phosphothreonine). Phosphoserine occurs at positions 25, 28, 49, and 52. Phosphothreonine is present on Thr54. Ser56 bears the Phosphoserine mark. A helical membrane pass occupies residues 75-97 (MSVFNLSNAIMGSGILGLAFALA). Over 98-112 (NTGILLFLVLLTSVT) the chain is Extracellular. The helical transmembrane segment at 113 to 133 (LLSIYSINLLLICSKETGCMV) threads the bilayer. Residues 134–147 (YEKLGEQVFGTTGK) lie on the Cytoplasmic side of the membrane. The helical transmembrane segment at 148–168 (FVIFGATSLQNTGAMLSYLFI) threads the bilayer. At 169-188 (VKNELPSAIKFLMGKEETFS) the chain is on the extracellular side. Residues 189-211 (AWYVDGRVLVVIVTFGIILPLCL) traverse the membrane as a helical segment. At 212-216 (LKNLG) the chain is on the cytoplasmic side. A helical transmembrane segment spans residues 217 to 237 (YLGYTSGFSLSCMVFFLIVVI). Over 238 to 275 (YKKFQIPCIVPELNSTISANSTNADTCTPKYVTFNSKT) the chain is Extracellular. Residues Cys245 and Cys264 are joined by a disulfide bond. Residues Asn251 and Asn257 are each glycosylated (N-linked (GlcNAc...) asparagine). A helical membrane pass occupies residues 276-296 (VYALPTIAFAFVCHPSVLPIY). At 297-312 (SELKDRSQKKMQMVSN) the chain is on the cytoplasmic side. The chain crosses the membrane as a helical span at residues 313–333 (ISFFAMFVMYFLTAIFGYLTF). Residues 334–350 (YDNVQSDLLHKYQSKDD) are Extracellular-facing. The chain crosses the membrane as a helical span at residues 351–371 (ILILTVRLAVIVAVILTVPVL). Over 372 to 393 (FFTVRSSLFELAKKTKFNLCRH) the chain is Cytoplasmic. A helical transmembrane segment spans residues 394–414 (TVVTCILLVVINLLVIFIPSM). Residues 415-416 (KD) are Extracellular-facing. A helical membrane pass occupies residues 417–437 (IFGVVGVTSANMLIFILPSSL). The Cytoplasmic portion of the chain corresponds to 438-452 (YLKITDQDGDKGTQR). A helical membrane pass occupies residues 453-473 (IWAALFLGLGVLFSLVSIPLV). Residues 474–487 (IYDWACSSSSDEGH) are Extracellular-facing.

The protein belongs to the amino acid/polyamine transporter 2 family. N-glycosylation plays an important role in the L-glutamine transport. In terms of tissue distribution, expressed in the cerebral cortex by pyramidal and GABAergic neurons, astrocytes and other non-neuronal cells (at protein level). Expressed in placenta, heart, lung, skeletal muscle, spleen, stomach and testis. Highly expressed in cytotrophoblast cells from term placenta.

The protein resides in the cell membrane. The catalysed reaction is L-glutamine(in) + Na(+)(in) = L-glutamine(out) + Na(+)(out). The enzyme catalyses L-alanine(in) + Na(+)(in) = L-alanine(out) + Na(+)(out). It carries out the reaction L-asparagine(in) + Na(+)(in) = L-asparagine(out) + Na(+)(out). It catalyses the reaction L-histidine(in) + Na(+)(in) = L-histidine(out) + Na(+)(out). The catalysed reaction is L-serine(in) + Na(+)(in) = L-serine(out) + Na(+)(out). The enzyme catalyses L-cysteine(in) + Na(+)(in) = L-cysteine(out) + Na(+)(out). It carries out the reaction L-methionine(in) + Na(+)(in) = L-methionine(out) + Na(+)(out). It catalyses the reaction glycine(in) + Na(+)(in) = glycine(out) + Na(+)(out). The catalysed reaction is L-threonine(in) + Na(+)(in) = L-threonine(out) + Na(+)(out). The enzyme catalyses L-proline(in) + Na(+)(in) = L-proline(out) + Na(+)(out). Its activity is regulated as follows. Inhibited by alpha-(methylamino)isobutyric acid (MeAIB). Inhibited by lithium, potassium, choline ions, N-methylglucamine. The pH dependence has an allosteric effect on the transport. Functionally, symporter that cotransports short-chain neutral amino acids and sodium ions from the extraccellular to the intracellular side of the cell membrane. The transport is elctrogenic, pH dependent and driven by the Na(+) electrochemical gradient. Participates in the astroglia-derived glutamine transport into GABAergic interneurons for neurotransmitter GABA de novo synthesis. May also contributes to amino acid transport in placental trophoblasts. Also regulates synaptic plasticity. This is Sodium-coupled neutral amino acid symporter 1 (SLC38A1) from Homo sapiens (Human).